The following is a 442-amino-acid chain: Proline--tRNA ligase (442 aa).

It belongs to the class-II aminoacyl-tRNA synthetase family. ProS type 2 subfamily. Homodimer.

Its subcellular location is the cytoplasm. The enzyme catalyses tRNA(Pro) + L-proline + ATP = L-prolyl-tRNA(Pro) + AMP + diphosphate. In terms of biological role, catalyzes the attachment of proline to tRNA(Pro) in a two-step reaction: proline is first activated by ATP to form Pro-AMP and then transferred to the acceptor end of tRNA(Pro). This is Proline--tRNA ligase from Brucella anthropi (strain ATCC 49188 / DSM 6882 / CCUG 24695 / JCM 21032 / LMG 3331 / NBRC 15819 / NCTC 12168 / Alc 37) (Ochrobactrum anthropi).